The following is a 227-amino-acid chain: Cytochrome c oxidase subunit 2 (227 aa).

Residues 1–14 lie on the Mitochondrial intermembrane side of the membrane; sequence MAYPFQLGLQDATS. Residues 15 to 45 traverse the membrane as a helical segment; it reads PIMEELLHFHDHTLMIVFLISSLVLYIISLM. Topologically, residues 46–59 are mitochondrial matrix; the sequence is LTTKLTHTSTMDAQ. A helical transmembrane segment spans residues 60–87; it reads EVETVWTILPAIILILIALPSLRILYMM. The Mitochondrial intermembrane segment spans residues 88–227; the sequence is DEINNPSLTV…YFETWSAVMV (140 aa). Residues H161, C196, E198, C200, H204, and M207 each contribute to the Cu cation site. E198 lines the Mg(2+) pocket. Phosphotyrosine is present on Y218.

Belongs to the cytochrome c oxidase subunit 2 family. As to quaternary structure, component of the cytochrome c oxidase (complex IV, CIV), a multisubunit enzyme composed of 14 subunits. The complex is composed of a catalytic core of 3 subunits MT-CO1, MT-CO2 and MT-CO3, encoded in the mitochondrial DNA, and 11 supernumerary subunits COX4I, COX5A, COX5B, COX6A, COX6B, COX6C, COX7A, COX7B, COX7C, COX8 and NDUFA4, which are encoded in the nuclear genome. The complex exists as a monomer or a dimer and forms supercomplexes (SCs) in the inner mitochondrial membrane with NADH-ubiquinone oxidoreductase (complex I, CI) and ubiquinol-cytochrome c oxidoreductase (cytochrome b-c1 complex, complex III, CIII), resulting in different assemblies (supercomplex SCI(1)III(2)IV(1) and megacomplex MCI(2)III(2)IV(2)). Found in a complex with TMEM177, COA6, COX18, COX20, SCO1 and SCO2. Interacts with TMEM177 in a COX20-dependent manner. Interacts with COX20. Interacts with COX16. It depends on Cu cation as a cofactor.

The protein localises to the mitochondrion inner membrane. The enzyme catalyses 4 Fe(II)-[cytochrome c] + O2 + 8 H(+)(in) = 4 Fe(III)-[cytochrome c] + 2 H2O + 4 H(+)(out). Its function is as follows. Component of the cytochrome c oxidase, the last enzyme in the mitochondrial electron transport chain which drives oxidative phosphorylation. The respiratory chain contains 3 multisubunit complexes succinate dehydrogenase (complex II, CII), ubiquinol-cytochrome c oxidoreductase (cytochrome b-c1 complex, complex III, CIII) and cytochrome c oxidase (complex IV, CIV), that cooperate to transfer electrons derived from NADH and succinate to molecular oxygen, creating an electrochemical gradient over the inner membrane that drives transmembrane transport and the ATP synthase. Cytochrome c oxidase is the component of the respiratory chain that catalyzes the reduction of oxygen to water. Electrons originating from reduced cytochrome c in the intermembrane space (IMS) are transferred via the dinuclear copper A center (CU(A)) of subunit 2 and heme A of subunit 1 to the active site in subunit 1, a binuclear center (BNC) formed by heme A3 and copper B (CU(B)). The BNC reduces molecular oxygen to 2 water molecules using 4 electrons from cytochrome c in the IMS and 4 protons from the mitochondrial matrix. In Lycalopex vetulus (Hoary fox), this protein is Cytochrome c oxidase subunit 2 (MT-CO2).